We begin with the raw amino-acid sequence, 600 residues long: Proline--tRNA ligase (600 aa).

This sequence belongs to the class-II aminoacyl-tRNA synthetase family. ProS type 1 subfamily. As to quaternary structure, homodimer.

The protein resides in the cytoplasm. The enzyme catalyses tRNA(Pro) + L-proline + ATP = L-prolyl-tRNA(Pro) + AMP + diphosphate. In terms of biological role, catalyzes the attachment of proline to tRNA(Pro) in a two-step reaction: proline is first activated by ATP to form Pro-AMP and then transferred to the acceptor end of tRNA(Pro). As ProRS can inadvertently accommodate and process non-cognate amino acids such as alanine and cysteine, to avoid such errors it has two additional distinct editing activities against alanine. One activity is designated as 'pretransfer' editing and involves the tRNA(Pro)-independent hydrolysis of activated Ala-AMP. The other activity is designated 'posttransfer' editing and involves deacylation of mischarged Ala-tRNA(Pro). The misacylated Cys-tRNA(Pro) is not edited by ProRS. The polypeptide is Proline--tRNA ligase (Synechococcus elongatus (strain ATCC 33912 / PCC 7942 / FACHB-805) (Anacystis nidulans R2)).